Here is a 396-residue protein sequence, read N- to C-terminus: MEKQRSKKTKISDDLITCSGNSVQIPFDLIPEILKRLPVKTLARFLSVSKEYTSIIRNRDFMKSYLINSSTRPQSLIFTIAGGGIHCFFSLIDQGESTSSSKPTYLMNCPHLQLKTFAPSVHGLICHGPPSTLIVSSPRLIVSNPSTRRSIILPKIDANHECIYHHMGYDPIDGDYKVLCMMKGMHVYQRRYLAKELQVFTLRKGNSWRMVEDFPPHCLCHEDTPDLCINGVLYYVAMLDTASNHAVMSFDVRSEKFDLIKGGPDGDLNPKLTRYEGKPALLFPGSDYRINLWVIEDAAKHEWSKMSYDVSSTSLIRNPYFHHCVFCTNDAGEIVLAPDFVRTKTFVVLYYHPKKNTMRSVVIKGIRDRKIPLWDEASYHRIISVFSGQVDNLMFL.

Residues Ser19 to Tyr65 enclose the F-box domain.

The polypeptide is F-box protein At2g21930 (Arabidopsis thaliana (Mouse-ear cress)).